A 39-amino-acid polypeptide reads, in one-letter code: Larval cuticle protein SC6 (39 aa).

Residues V15–D39 form the Chitin-binding type R&amp;R domain.

Functionally, component of the cuticle of the larva of flesh fly. This Sarcophaga bullata (Grey flesh fly) protein is Larval cuticle protein SC6.